We begin with the raw amino-acid sequence, 304 residues long: Pseudouridine-5'-phosphate glycosidase (304 aa).

E25 serves as the catalytic Proton donor. K86 and V106 together coordinate substrate. Position 138 (D138) interacts with Mn(2+). 140 to 142 (SAD) contacts substrate. K159 acts as the Nucleophile in catalysis.

The protein belongs to the pseudouridine-5'-phosphate glycosidase family. In terms of assembly, homotrimer. Mn(2+) serves as cofactor.

It catalyses the reaction D-ribose 5-phosphate + uracil = psi-UMP + H2O. Its function is as follows. Catalyzes the reversible cleavage of pseudouridine 5'-phosphate (PsiMP) to ribose 5-phosphate and uracil. Functions biologically in the cleavage direction, as part of a pseudouridine degradation pathway. The protein is Pseudouridine-5'-phosphate glycosidase of Lysinibacillus sphaericus (strain C3-41).